We begin with the raw amino-acid sequence, 460 residues long: UDP-N-acetylmuramate--L-alanine ligase (460 aa).

Residue 118 to 124 (GAHGKTT) coordinates ATP.

The protein belongs to the MurCDEF family.

It localises to the cytoplasm. The catalysed reaction is UDP-N-acetyl-alpha-D-muramate + L-alanine + ATP = UDP-N-acetyl-alpha-D-muramoyl-L-alanine + ADP + phosphate + H(+). The protein operates within cell wall biogenesis; peptidoglycan biosynthesis. Functionally, cell wall formation. This is UDP-N-acetylmuramate--L-alanine ligase from Clostridium botulinum (strain Alaska E43 / Type E3).